A 100-amino-acid chain; its full sequence is UPF0213 protein YhbQ (100 aa).

The GIY-YIG domain occupies 2 to 77; it reads TPWFLYLIRT…KQLTKRQKER (76 aa).

This sequence belongs to the UPF0213 family.

This chain is UPF0213 protein YhbQ, found in Escherichia coli O1:K1 / APEC.